The chain runs to 246 residues: Proteasome subunit alpha type-6-B (246 aa).

The protein belongs to the peptidase T1A family. In terms of assembly, component of the 20S core complex of the 26S proteasome. The 26S proteasome is composed of a core protease (CP), known as the 20S proteasome, capped at one or both ends by the 19S regulatory particle (RP/PA700). The 20S proteasome core is composed of 28 subunits that are arranged in four stacked rings, resulting in a barrel-shaped structure. The two end rings are each formed by seven alpha subunits, and the two central rings are each formed by seven beta subunits. The catalytic chamber with the active sites is on the inside of the barrel.

The protein localises to the cytoplasm. It localises to the nucleus. In terms of biological role, the proteasome is a multicatalytic proteinase complex which is characterized by its ability to cleave peptides with Arg, Phe, Tyr, Leu, and Glu adjacent to the leaving group at neutral or slightly basic pH. The proteasome has an ATP-dependent proteolytic activity. In Arabidopsis thaliana (Mouse-ear cress), this protein is Proteasome subunit alpha type-6-B (PAA2).